Here is a 93-residue protein sequence, read N- to C-terminus: Long neurotoxin 1 (93 aa).

An N-terminal signal peptide occupies residues 1–21 (MKTLLLTLVVVTIVCLDLGNS). Intrachain disulfides connect Cys-24/Cys-42, Cys-35/Cys-63, Cys-48/Cys-52, Cys-67/Cys-78, and Cys-79/Cys-84.

Belongs to the three-finger toxin family. Long-chain subfamily. Type II alpha-neurotoxin sub-subfamily. Expressed by the venom gland.

It localises to the secreted. Binds with high affinity to muscular (alpha-1/CHRNA1) and neuronal (alpha-7/CHRNA7) nicotinic acetylcholine receptor (nAChR) and inhibits acetylcholine from binding to the receptor, thereby impairing neuromuscular and neuronal transmission. This chain is Long neurotoxin 1, found in Tropidechis carinatus (Australian rough-scaled snake).